The primary structure comprises 475 residues: Flavin-dependent monooxygenase (475 aa).

Belongs to the aromatic-ring hydroxylase family. It depends on FAD as a cofactor.

The protein localises to the cytoplasm. It carries out the reaction a tetracycline + NADPH + O2 + H(+) = an 11a-hydroxytetracycline + NADP(+) + H2O. The enzyme catalyses tetracycline + NADPH + O2 + H(+) = 11a-hydroxytetracycline + NADP(+) + H2O. With respect to regulation, inhibited by anhydrotetracycline. Its function is as follows. An FAD-requiring monooxygenase active on some tetracycline antibiotic derivatives, which leads to their inactivation. Hydroxylates carbon 11a of tetracycline and some analogs. Confers resistance to tetracycline and doxycycline via an oxidoreductase activity; probably monooxygenates the antibiotics. Does not act on tigecycline. The chain is Flavin-dependent monooxygenase from Mycobacteroides abscessus (strain ATCC 19977 / DSM 44196 / CCUG 20993 / CIP 104536 / JCM 13569 / NCTC 13031 / TMC 1543 / L948) (Mycobacterium abscessus).